The primary structure comprises 208 residues: N-(5'-phosphoribosyl)anthranilate isomerase (208 aa).

It belongs to the TrpF family.

It carries out the reaction N-(5-phospho-beta-D-ribosyl)anthranilate = 1-(2-carboxyphenylamino)-1-deoxy-D-ribulose 5-phosphate. It functions in the pathway amino-acid biosynthesis; L-tryptophan biosynthesis; L-tryptophan from chorismate: step 3/5. The sequence is that of N-(5'-phosphoribosyl)anthranilate isomerase from Dechloromonas aromatica (strain RCB).